Consider the following 118-residue polypeptide: Small ribosomal subunit protein uS13 (118 aa).

Residues Val97 to Lys118 are disordered.

The protein belongs to the universal ribosomal protein uS13 family. In terms of assembly, part of the 30S ribosomal subunit. Forms a loose heterodimer with protein S19. Forms two bridges to the 50S subunit in the 70S ribosome.

In terms of biological role, located at the top of the head of the 30S subunit, it contacts several helices of the 16S rRNA. In the 70S ribosome it contacts the 23S rRNA (bridge B1a) and protein L5 of the 50S subunit (bridge B1b), connecting the 2 subunits; these bridges are implicated in subunit movement. Contacts the tRNAs in the A and P-sites. The sequence is that of Small ribosomal subunit protein uS13 from Buchnera aphidicola subsp. Schizaphis graminum (strain Sg).